A 186-amino-acid chain; its full sequence is Large ribosomal subunit protein bL12c (186 aa).

Residues 1 to 11 are compositionally biased toward polar residues; the sequence is MASTLSTITLR. 2 disordered regions span residues 1–23 and 162–186; these read MASTLSTITLRSPSPSTASSTHA and EGVSKDEAEDAKKQLEEAGAKVSIA. Residues 1–53 constitute a chloroplast transit peptide; it reads MASTLSTITLRSPSPSTASSTHASIPFPKKALEFPIRTPKLHHRRATFLRPLA. Over residues 12–23 the composition is skewed to low complexity; that stretch reads SPSPSTASSTHA. The segment covering 162 to 180 has biased composition (basic and acidic residues); sequence EGVSKDEAEDAKKQLEEAG.

This sequence belongs to the bacterial ribosomal protein bL12 family.

It localises to the plastid. Its subcellular location is the chloroplast. This Nicotiana tabacum (Common tobacco) protein is Large ribosomal subunit protein bL12c (RPL12).